The primary structure comprises 451 residues: Midnolin-B (451 aa).

Residues 20 to 94 (MNLNIQSTTG…LTLLPSVEAG (75 aa)) enclose the Ubiquitin-like domain. Disordered regions lie at residues 187–254 (ASCT…RSRK), 331–372 (RNAK…QTEN), and 388–427 (QKRLRRKARRDSRAPYHWMPTRKSSRTSSNSSTSSGEGSL). Low complexity-rich tracts occupy residues 190-205 (TPGSTPPTTLSPTSST), 237-250 (STRGTEGTSSSPSS), and 336-347 (TSPQSTGPQQTT). Over residues 363–372 (SGDRLRQTEN) the composition is skewed to basic and acidic residues. Positions 388 to 397 (QKRLRRKARR) are enriched in basic residues. Residues 413–426 (RTSSNSSTSSGEGS) show a composition bias toward low complexity.

The protein resides in the nucleus. It is found in the cytoplasm. The protein localises to the cytosol. It localises to the nucleolus. Its function is as follows. Facilitates ubiquitin-independent proteasomal degradation of polycomb protein CBX4. Plays a role in inhibiting the activity of glucokinase GCK and both glucose-induced and basal insulin secretion. The sequence is that of Midnolin-B (midn-b) from Xenopus laevis (African clawed frog).